Consider the following 189-residue polypeptide: Isopentenyl-diphosphate Delta-isomerase 2 (189 aa).

2 residues coordinate Mn(2+): His24 and His30. Positions 28–160 (ALHRAISIFV…PETYSFWLAA (133 aa)) constitute a Nudix hydrolase domain. Cys65 is an active-site residue. Cys65 lines the Mg(2+) pocket. Residue His67 participates in Mn(2+) binding. Glu85 contributes to the Mg(2+) binding site. 2 residues coordinate Mn(2+): Glu110 and Glu112. Glu112 is a catalytic residue.

It belongs to the IPP isomerase type 1 family. It depends on Mg(2+) as a cofactor. Mn(2+) is required as a cofactor.

The protein localises to the cytoplasm. The enzyme catalyses isopentenyl diphosphate = dimethylallyl diphosphate. It functions in the pathway isoprenoid biosynthesis; dimethylallyl diphosphate biosynthesis; dimethylallyl diphosphate from isopentenyl diphosphate: step 1/1. Its function is as follows. Catalyzes the 1,3-allylic rearrangement of the homoallylic substrate isopentenyl (IPP) to its highly electrophilic allylic isomer, dimethylallyl diphosphate (DMAPP). The polypeptide is Isopentenyl-diphosphate Delta-isomerase 2 (Aromatoleum aromaticum (strain DSM 19018 / LMG 30748 / EbN1) (Azoarcus sp. (strain EbN1))).